The chain runs to 146 residues: D-aminoacyl-tRNA deacylase (146 aa).

The Gly-cisPro motif, important for rejection of L-amino acids motif lies at glycine 137–proline 138.

It belongs to the DTD family. In terms of assembly, homodimer.

It is found in the cytoplasm. The catalysed reaction is glycyl-tRNA(Ala) + H2O = tRNA(Ala) + glycine + H(+). The enzyme catalyses a D-aminoacyl-tRNA + H2O = a tRNA + a D-alpha-amino acid + H(+). Its function is as follows. An aminoacyl-tRNA editing enzyme that deacylates mischarged D-aminoacyl-tRNAs. Also deacylates mischarged glycyl-tRNA(Ala), protecting cells against glycine mischarging by AlaRS. Acts via tRNA-based rather than protein-based catalysis; rejects L-amino acids rather than detecting D-amino acids in the active site. By recycling D-aminoacyl-tRNA to D-amino acids and free tRNA molecules, this enzyme counteracts the toxicity associated with the formation of D-aminoacyl-tRNA entities in vivo and helps enforce protein L-homochirality. This Bacillus cytotoxicus (strain DSM 22905 / CIP 110041 / 391-98 / NVH 391-98) protein is D-aminoacyl-tRNA deacylase.